The following is a 1162-amino-acid chain: Eukaryotic translation initiation factor 2-alpha kinase (1162 aa).

Residues 1–39 (MQDDLDGIVRHRRRSLSFLQIVTLTMAGLVAFDPAQVLA) form the signal peptide. The Lumenal portion of the chain corresponds to 40 to 537 (GHPTTDSELQ…DDIDAPVKVV (498 aa)). Asparagine 193, asparagine 260, asparagine 353, asparagine 461, asparagine 505, and asparagine 516 each carry an N-linked (GlcNAc...) asparagine glycan. A disordered region spans residues 498 to 517 (TAPTSPTNATSEGTEATGNH). Residues 499-517 (APTSPTNATSEGTEATGNH) show a composition bias toward polar residues. Residues 538 to 558 (ILSLWFWWKEIVVIAFTSAVI) traverse the membrane as a helical segment. Over 559-1162 (LNIFMGQRNQ…TFSSSSEPHQ (604 aa)) the chain is Cytoplasmic. Phosphoserine is present on serine 624. A Protein kinase domain is found at 642–1130 (FELMQCLGRG…LRNILQLPHL (489 aa)). ATP-binding positions include 648–656 (LGRGGFGVV) and lysine 671. Serine 797 carries the post-translational modification Phosphoserine. The tract at residues 801–839 (FRSESQSAALRAEEEDDTDDDYEEDEEQQGDHEKRHRSS) is disordered. A compositionally biased stretch (acidic residues) spans 813–828 (EEEDDTDDDYEEDEEQ). Phosphothreonine is present on threonine 818. Aspartate 980 serves as the catalytic Proton acceptor. Threonine 1028 is modified (phosphothreonine). Residues 1135 to 1162 (QSEQAELAERARRLSRSRTFSSSSEPHQ) form a disordered region. Low complexity predominate over residues 1151–1162 (SRTFSSSSEPHQ).

This sequence belongs to the protein kinase superfamily. Ser/Thr protein kinase family. GCN2 subfamily. In terms of assembly, forms dimers with HSPA5/BIP in resting cells. Oligomerizes in ER-stressed cells. Post-translationally, autophosphorylated. N-glycosylated.

It is found in the endoplasmic reticulum membrane. The enzyme catalyses L-seryl-[protein] + ATP = O-phospho-L-seryl-[protein] + ADP + H(+). It carries out the reaction L-threonyl-[protein] + ATP = O-phospho-L-threonyl-[protein] + ADP + H(+). With respect to regulation, perturbation in protein folding in the endoplasmic reticulum (ER) promotes reversible dissociation from HSPA5/BIP and oligomerization, resulting in transautophosphorylation and kinase activity induction. Functionally, phosphorylates the alpha subunit of eukaryotic translation-initiation factor 2 (EIF2), leading to its inactivation and thus to a rapid reduction of translational initiation and repression of global protein synthesis. This is Eukaryotic translation initiation factor 2-alpha kinase (PEK) from Drosophila melanogaster (Fruit fly).